We begin with the raw amino-acid sequence, 961 residues long: SH3 domain-binding protein 4 (961 aa).

The 60-residue stretch at glycine 55–tyrosine 114 folds into the SH3 1 domain. Phosphoserine is present on residues serine 131, serine 244, serine 249, serine 277, and serine 294. The 138-residue stretch at threonine 315–valine 452 folds into the ZU5 domain. Serine 635 carries the phosphoserine modification. The 71-residue stretch at serine 652–lysine 722 folds into the SH3 2 domain.

As to quaternary structure, homodimer or homooligomer. Interacts with DNM2, EPS15, clathrin, the adapter protein complex 2/AP-2 and TFRC. Interacts with the Rag GTPases RRAGA, RRAGB, RRAGC and RRAGD; the interaction is most probably direct, preferentially occurs with their inactive GDP-bound form and is negatively regulated by amino acids. Post-translationally, phosphorylated upon EGF stimulation. Phosphorylation prevents interaction with DNM2.

Its subcellular location is the membrane. The protein localises to the clathrin-coated pit. It localises to the cytoplasmic vesicle. The protein resides in the clathrin-coated vesicle. It is found in the nucleus. In terms of biological role, may function in transferrin receptor internalization at the plasma membrane through a cargo-specific control of clathrin-mediated endocytosis. Alternatively, may act as a negative regulator of the amino acid-induced TOR signaling by inhibiting the formation of active Rag GTPase complexes. Preferentially binds inactive Rag GTPase complexes and prevents their interaction with the mTORC1 complex inhibiting its relocalization to lysosomes and its activation. Thereby, may indirectly regulate cell growth, proliferation and autophagy. This is SH3 domain-binding protein 4 (Sh3bp4) from Rattus norvegicus (Rat).